A 277-amino-acid polypeptide reads, in one-letter code: Phosphate import ATP-binding protein PstB (277 aa).

The ABC transporter domain occupies 31 to 272; it reads LEVPGLNLFY…PAKKQTEDYI (242 aa). 63 to 70 serves as a coordination point for ATP; the sequence is GPSGCGKS.

It belongs to the ABC transporter superfamily. Phosphate importer (TC 3.A.1.7) family. As to quaternary structure, the complex is composed of two ATP-binding proteins (PstB), two transmembrane proteins (PstC and PstA) (Potential). PstS is missing in this species.

Its subcellular location is the cell inner membrane. It carries out the reaction phosphate(out) + ATP + H2O = ADP + 2 phosphate(in) + H(+). In terms of biological role, part of the ABC transporter complex PstSACB involved in phosphate import. Responsible for energy coupling to the transport system. This Pseudomonas aeruginosa (strain ATCC 15692 / DSM 22644 / CIP 104116 / JCM 14847 / LMG 12228 / 1C / PRS 101 / PAO1) protein is Phosphate import ATP-binding protein PstB.